The following is a 703-amino-acid chain: Cyclomaltodextrin glucanotransferase (703 aa).

The first 29 residues, 1–29 (MNDLNDFLKTILLSFIFFLLLSLPTVAEA), serve as a signal peptide directing secretion. The interval 30–160 (DVTNKVNYSK…GIKVIMDFTP (131 aa)) is A1. Ca(2+)-binding residues include Asp52, Asn54, Asn57, and Asn58. Cys68 and Cys75 form a disulfide bridge. Gly76 and Asp78 together coordinate Ca(2+). 122–123 (YW) lines the substrate pocket. Asn161 contributes to the Ca(2+) binding site. Residues 161-224 (NHSSPALETN…NLYDLADYDL (64 aa)) are b. His162 provides a ligand contact to substrate. Ile212 lines the Ca(2+) pocket. Position 215–218 (215–218 (NLYD)) interacts with substrate. Asp221 is a Ca(2+) binding site. The tract at residues 225–428 (NNTVMDQYLK…LRQTNSALGY (204 aa)) is A2. Arg249 serves as a coordination point for substrate. Asp251 functions as the Nucleophile in the catalytic mechanism. 254 to 255 (KH) lines the substrate pocket. His255 is a Ca(2+) binding site. Residue Glu279 is the Proton donor of the active site. The substrate site is built by His349, Asp393, and Arg397. Residues 429-516 (GTTTERWLNE…SVAVWQVSNP (88 aa)) form a c region. The interval 517–600 (STSPLIGQVG…SPTYKEFEVL (84 aa)) is d. In terms of domain architecture, IPT/TIG spans 520-598 (PLIGQVGPMM…IKSPTYKEFE (79 aa)). Residues 599–703 (VLSGNQVSVR…TGTDTVMINW (105 aa)) form the CBM20 domain. Positions 601–703 (SGNQVSVRFG…TGTDTVMINW (103 aa)) are e.

It belongs to the glycosyl hydrolase 13 family. As to quaternary structure, monomer. Requires Ca(2+) as cofactor.

It is found in the secreted. The enzyme catalyses Cyclizes part of a (1-&gt;4)-alpha-D-glucan chain by formation of a (1-&gt;4)-alpha-D-glucosidic bond.. This chain is Cyclomaltodextrin glucanotransferase (cgt), found in Bacillus sp. (strain 1-1).